Here is a 364-residue protein sequence, read N- to C-terminus: Aminomethyltransferase (364 aa).

It belongs to the GcvT family. In terms of assembly, the glycine cleavage system is composed of four proteins: P, T, L and H.

It carries out the reaction N(6)-[(R)-S(8)-aminomethyldihydrolipoyl]-L-lysyl-[protein] + (6S)-5,6,7,8-tetrahydrofolate = N(6)-[(R)-dihydrolipoyl]-L-lysyl-[protein] + (6R)-5,10-methylene-5,6,7,8-tetrahydrofolate + NH4(+). Functionally, the glycine cleavage system catalyzes the degradation of glycine. The polypeptide is Aminomethyltransferase (Escherichia coli O17:K52:H18 (strain UMN026 / ExPEC)).